Reading from the N-terminus, the 160-residue chain is Protein cornichon homolog 2 (160 aa).

Topologically, residues 1–10 are cytoplasmic; the sequence is MAFTFAAFCY. Residues 11–31 form a helical membrane-spanning segment; sequence MLTLVLCAALIFFVIWQIIAF. The Lumenal portion of the chain corresponds to 32 to 72; sequence DELRTDFKNPIDQSNPTRARERILNIERICNLLRRLVVPEY. The helical transmembrane segment at 73–93 threads the bilayer; it reads SIHGLFCLMFMCAGEWVTLGL. The Cytoplasmic segment spans residues 94–138; it reads NIPLLLYHLWRFFHRPADGSEVMYDPVSVMNADILNYCQKESWCK. The helical transmembrane segment at 139–159 threads the bilayer; sequence LGFYLLSFFYYLYSMVYALVS. Phenylalanine 160 is a topological domain (lumenal).

It belongs to the cornichon family.

The protein localises to the membrane. In terms of biological role, regulates the trafficking and gating properties of AMPA-selective glutamate receptors (AMPARs). The protein is Protein cornichon homolog 2 (cnih2) of Danio rerio (Zebrafish).